The chain runs to 379 residues: Chaperone protein DnaJ (379 aa).

The J domain maps to 5 to 70 (DYYETLGCDR…QKRAAYDRFG (66 aa)). The segment at 134–212 (GKTAQIKIPT…CGGAGRVTRE (79 aa)) adopts a CR-type zinc-finger fold. Cys147, Cys150, Cys164, Cys167, Cys186, Cys189, Cys200, and Cys203 together coordinate Zn(2+). 4 CXXCXGXG motif repeats span residues 147-154 (CETCSGTG), 164-171 (CRMCGGAG), 186-193 (CPNCQGRG), and 200-207 (CSDCGGAG).

This sequence belongs to the DnaJ family. As to quaternary structure, homodimer. The cofactor is Zn(2+).

The protein localises to the cytoplasm. Participates actively in the response to hyperosmotic and heat shock by preventing the aggregation of stress-denatured proteins and by disaggregating proteins, also in an autonomous, DnaK-independent fashion. Unfolded proteins bind initially to DnaJ; upon interaction with the DnaJ-bound protein, DnaK hydrolyzes its bound ATP, resulting in the formation of a stable complex. GrpE releases ADP from DnaK; ATP binding to DnaK triggers the release of the substrate protein, thus completing the reaction cycle. Several rounds of ATP-dependent interactions between DnaJ, DnaK and GrpE are required for fully efficient folding. Also involved, together with DnaK and GrpE, in the DNA replication of plasmids through activation of initiation proteins. This is Chaperone protein DnaJ from Xanthobacter autotrophicus (strain ATCC BAA-1158 / Py2).